Reading from the N-terminus, the 371-residue chain is MALETFVNSEPFTFGVELEIQVVNTHNYDLTKAASDLMRLIQGETFPGNITPEITESMIELSTGICHTHEQALGELHAIRDVLVKAADQLNVGLAGGGTHAFQQWSDRQIYDAPRFQYLSELYGYLAKQFTVFGQHVHIGCPDPDSALFLLHSMSRFIPHFIALSASSPFVQNVDTGFHSARLNSVFAFPLSGRAPFALTWHDFEEYFTKMVNTGVVNSMKDFYWDIRPKPGYGTIEVRVMDTPLSVDRAAAIACYIQTLARYLLIDRPLTLTEDDYLVYTFNRFEACRFGLEGTCVNPQTGERRTIAEDILDTLDRIAPHAAELGSRAALDEIGALAKARVNDASWLRTVFKQEKSLNETVRQQCLRWRE.

The protein belongs to the glutamate--cysteine ligase type 2 family. YbdK subfamily.

The enzyme catalyses L-cysteine + L-glutamate + ATP = gamma-L-glutamyl-L-cysteine + ADP + phosphate + H(+). Functionally, ATP-dependent carboxylate-amine ligase which exhibits weak glutamate--cysteine ligase activity. The protein is Putative glutamate--cysteine ligase 2 of Burkholderia multivorans (strain ATCC 17616 / 249).